The chain runs to 206 residues: Large ribosomal subunit protein uL4 (206 aa).

The tract at residues 44–78 (RSGNRAQKDREQVKHTTKKPWRQKGTGRARAGMSS) is disordered. Basic residues predominate over residues 58 to 70 (HTTKKPWRQKGTG).

This sequence belongs to the universal ribosomal protein uL4 family. In terms of assembly, part of the 50S ribosomal subunit.

Its function is as follows. One of the primary rRNA binding proteins, this protein initially binds near the 5'-end of the 23S rRNA. It is important during the early stages of 50S assembly. It makes multiple contacts with different domains of the 23S rRNA in the assembled 50S subunit and ribosome. Functionally, forms part of the polypeptide exit tunnel. The protein is Large ribosomal subunit protein uL4 of Paraburkholderia phytofirmans (strain DSM 17436 / LMG 22146 / PsJN) (Burkholderia phytofirmans).